The sequence spans 227 residues: Glutathione S-transferase U27 (227 aa).

Residues 4 to 84 (EEVVVLNFWP…YIDEVWKDDK (81 aa)) enclose the GST N-terminal domain. Glutathione-binding positions include 14–15 (SM), 41–42 (QK), 55–56 (KI), and 68–69 (ES). The 126-residue stretch at 92–217 (DPYQKSQCRF…LKIFDRVTQI (126 aa)) folds into the GST C-terminal domain.

Belongs to the GST superfamily. Tau family.

Its subcellular location is the cytoplasm. It is found in the cytosol. The catalysed reaction is RX + glutathione = an S-substituted glutathione + a halide anion + H(+). In terms of biological role, may be involved in the conjugation of reduced glutathione to a wide number of exogenous and endogenous hydrophobic electrophiles and have a detoxification role against certain herbicides. This Arabidopsis thaliana (Mouse-ear cress) protein is Glutathione S-transferase U27 (GSTU27).